A 625-amino-acid polypeptide reads, in one-letter code: tRNA uridine 5-carboxymethylaminomethyl modification enzyme MnmG (625 aa).

FAD-binding positions include Gly13–Gly18, Val125, and Ser182. Gly276–Phe290 contacts NAD(+). Gln373 serves as a coordination point for FAD.

The protein belongs to the MnmG family. As to quaternary structure, homodimer. Heterotetramer of two MnmE and two MnmG subunits. It depends on FAD as a cofactor.

It localises to the cytoplasm. Functionally, NAD-binding protein involved in the addition of a carboxymethylaminomethyl (cmnm) group at the wobble position (U34) of certain tRNAs, forming tRNA-cmnm(5)s(2)U34. The protein is tRNA uridine 5-carboxymethylaminomethyl modification enzyme MnmG of Lactococcus lactis subsp. cremoris (strain MG1363).